The following is a 1073-amino-acid chain: Semaphorin-6D (1073 aa).

Positions Met1–Ala20 are cleaved as a signal peptide. The Extracellular portion of the chain corresponds to Val21–Asn662. The Sema domain maps to Asp27–Leu512. Asn51 carries an N-linked (GlcNAc...) asparagine glycan. Intrachain disulfides connect Cys108–Cys118, Cys136–Cys145, Cys259–Cys370, and Cys284–Cys329. Asn283 carries an N-linked (GlcNAc...) asparagine glycan. 2 N-linked (GlcNAc...) asparagine glycosylation sites follow: Asn435 and Asn461. 4 cysteine pairs are disulfide-bonded: Cys477–Cys506, Cys515–Cys533, Cys521–Cys568, and Cys525–Cys541. Residues Arg514–His569 form the PSI domain. A glycan (N-linked (GlcNAc...) asparagine) is linked at Asn631. The helical transmembrane segment at Val663–Val683 threads the bilayer. Over Tyr684–Tyr1073 the chain is Cytoplasmic. 3 positions are modified to phosphoserine: Ser723, Ser734, and Ser744. Disordered regions lie at residues Ser744 to Glu775, Ala787 to Pro825, Thr839 to Asp874, Ser914 to Thr1005, and Leu1021 to Tyr1073. At Thr773 the chain carries Phosphothreonine. Over residues Ser790–Thr805 the composition is skewed to basic and acidic residues. Residues Ser931, Ser957, and Ser983 each carry the phosphoserine modification. Positions Ser931–Thr942 are enriched in polar residues. Composition is skewed to polar residues over residues Asn980–Met995 and Leu1021–Leu1037.

It belongs to the semaphorin family.

The protein localises to the cell membrane. It is found in the cytoplasm. Functionally, shows growth cone collapsing activity on dorsal root ganglion (DRG) neurons in vitro. May be a stop signal for the DRG neurons in their target areas, and possibly also for other neurons. May also be involved in the maintenance and remodeling of neuronal connections. Ligand of TREM2 with PLXNA1 as coreceptor in dendritic cells, plays a role in the generation of immune responses and skeletal homeostasis. This chain is Semaphorin-6D, found in Homo sapiens (Human).